Reading from the N-terminus, the 230-residue chain is All-trans retinoic acid-induced differentiation factor (230 aa).

An N-terminal signal peptide occupies residues 1-26 (MTANVTVSSMYLFTVLLLLFNVYVNS). The Extracellular portion of the chain corresponds to 27–200 (QDTDAQLCQM…YKCMRQGEFP (174 aa)). In terms of domain architecture, EGF-like spans 152 to 194 (QKNACNQTVQMPLVCPENSLCSPYGPGFFECSCLNNFHGYKCM). 3 cysteine pairs are disulfide-bonded: C156/C172, C166/C182, and C184/C193. A helical membrane pass occupies residues 201–221 (LVKVLGILTASTVVVSSVLWF). The Cytoplasmic segment spans residues 222–230 (TQRRKVKNT).

It is found in the nucleus envelope. The protein localises to the cell membrane. It localises to the lysosome membrane. Its function is as follows. Involved in osteoblast cell differentiation. May play a role in inducing the cell cycle arrest. This chain is All-trans retinoic acid-induced differentiation factor (atraid), found in Danio rerio (Zebrafish).